The chain runs to 204 residues: Holliday junction branch migration complex subunit RuvA (204 aa).

The domain I stretch occupies residues 1–63 (MIGWLQGRVL…EDGQFLYGFS (63 aa)). Positions 64–142 (SFLQRQLFRE…KNDLFLCDES (79 aa)) are domain II. The flexible linker stretch occupies residues 143–152 (ESSRAPIALS). Residues 152–204 (SASEEAIQALIALELAPAEAELWVKKAQKTLAEDADSAALIKTAFALRLQGAK) are domain III.

This sequence belongs to the RuvA family. Homotetramer. Forms an RuvA(8)-RuvB(12)-Holliday junction (HJ) complex. HJ DNA is sandwiched between 2 RuvA tetramers; dsDNA enters through RuvA and exits via RuvB. An RuvB hexamer assembles on each DNA strand where it exits the tetramer. Each RuvB hexamer is contacted by two RuvA subunits (via domain III) on 2 adjacent RuvB subunits; this complex drives branch migration. In the full resolvosome a probable DNA-RuvA(4)-RuvB(12)-RuvC(2) complex forms which resolves the HJ.

It is found in the cytoplasm. Functionally, the RuvA-RuvB-RuvC complex processes Holliday junction (HJ) DNA during genetic recombination and DNA repair, while the RuvA-RuvB complex plays an important role in the rescue of blocked DNA replication forks via replication fork reversal (RFR). RuvA specifically binds to HJ cruciform DNA, conferring on it an open structure. The RuvB hexamer acts as an ATP-dependent pump, pulling dsDNA into and through the RuvAB complex. HJ branch migration allows RuvC to scan DNA until it finds its consensus sequence, where it cleaves and resolves the cruciform DNA. This chain is Holliday junction branch migration complex subunit RuvA, found in Dichelobacter nodosus (strain VCS1703A).